Consider the following 1242-residue polypeptide: von Willebrand factor A domain-containing protein 5B2 (1242 aa).

In terms of domain architecture, VIT spans 1–138; sequence MPGLYCPSSW…TMTVTLHSSR (138 aa). In terms of domain architecture, VWFA spans 354–527; it reads ELLFLLDSSS…KALEPALSDI (174 aa). 6 disordered regions span residues 569–650, 670–726, 751–794, 957–976, 987–1055, and 1118–1159; these read SRPP…SDTA, CSAS…CPLP, LAGR…GQGL, CSSE…SHLD, KGLQ…GSDH, and QGDS…GLGG. A compositionally biased stretch (low complexity) spans 588-604; that stretch reads PSPEEAPSAASPGTEPT. A compositionally biased stretch (polar residues) spans 605–619; sequence GTSEPLGTGTVSAEL. Over residues 681–700 the composition is skewed to low complexity; it reads TGSSESPGSQGPGSPEGSAP. Residues 1125 to 1138 show a composition bias toward low complexity; the sequence is SCSPSPSSGSEGPG.

The sequence is that of von Willebrand factor A domain-containing protein 5B2 (VWA5B2) from Homo sapiens (Human).